The sequence spans 467 residues: tRNA dimethylallyltransferase (467 aa).

The transit peptide at 1 to 47 (MASVAAARAVPVGSGLRGLQRTLPLVVILGATGTGKSTLALQLGQRL) directs the protein to the mitochondrion. 32 to 37 (TGTGKS) contributes to the dimethylallyl diphosphate binding site. Interaction with substrate tRNA regions lie at residues 55–58 (DSMQ) and 183–187 (RKVAR). The interval 221-230 (FSNPCILWLH) is core aggregation region. Residues 233–255 (QAVLDERLDKRVDDMLAAGLLEE) are interaction with isopentenylpyrophosphate transferase. Interaction with substrate tRNA regions lie at residues 281-283 (QSI) and 313-331 (ALKQVTKRYARKQNRWVKN). Residues 395-425 (HLCDLCDRIIIGDREWAAHIKSKSHLNQLKK) form a Matrin-type zinc finger. The segment at 429–467 (LDSDAVNTIESQSVSPDHNKEPKEKGSPGQNDQELKCSV) is disordered. The span at 433-444 (AVNTIESQSVSP) shows a compositional bias: polar residues. Residue Ser-443 is modified to Phosphoserine. Residues 445-454 (DHNKEPKEKG) are compositionally biased toward basic and acidic residues. Residue Ser-455 is modified to Phosphoserine.

It belongs to the IPP transferase family.

It is found in the mitochondrion. Its subcellular location is the cytoplasm. The catalysed reaction is adenosine(37) in tRNA + dimethylallyl diphosphate = N(6)-dimethylallyladenosine(37) in tRNA + diphosphate. In terms of biological role, catalyzes the transfer of a dimethylallyl group onto the adenine at position 37 of both cytosolic and mitochondrial tRNAs, leading to the formation of N6-(dimethylallyl)adenosine (i6A37). Mediates modification of a limited subset of tRNAs: tRNA(Ser)(AGA), tRNA(Ser)(CGA), tRNA(Ser)(UGA), as well as partial modification of the selenocysteine tRNA(Ser)(UCA). TRIT1 is therefore required for selenoprotein expression. In Homo sapiens (Human), this protein is tRNA dimethylallyltransferase (TRIT1).